A 25-amino-acid polypeptide reads, in one-letter code: Xenoposin precursor fragment BM1 (25 aa).

In terms of tissue distribution, expressed by the skin glands.

It localises to the secreted. In terms of biological role, antimicrobial peptide. The chain is Xenoposin precursor fragment BM1 from Xenopus boumbaensis (Mawa clawed frog).